A 480-amino-acid polypeptide reads, in one-letter code: ATP synthase subunit beta, chloroplastic (480 aa).

161-168 (GGAGVGKT) contributes to the ATP binding site.

This sequence belongs to the ATPase alpha/beta chains family. As to quaternary structure, F-type ATPases have 2 components, CF(1) - the catalytic core - and CF(0) - the membrane proton channel. CF(1) has five subunits: alpha(3), beta(3), gamma(1), delta(1), epsilon(1). CF(0) has four main subunits: a(1), b(1), b'(1) and c(9-12).

Its subcellular location is the plastid. The protein resides in the chloroplast thylakoid membrane. The enzyme catalyses ATP + H2O + 4 H(+)(in) = ADP + phosphate + 5 H(+)(out). Produces ATP from ADP in the presence of a proton gradient across the membrane. The catalytic sites are hosted primarily by the beta subunits. This Tetradesmus obliquus (Green alga) protein is ATP synthase subunit beta, chloroplastic.